Reading from the N-terminus, the 111-residue chain is Elevenin (111 aa).

Residues 1-24 (MAPSQKALLVLVLSMLLTASDSRA) form the signal peptide. A disulfide bridge connects residues Cys-29 and Cys-38. Positions 44–111 (KRGGDSLSVG…TEQLDRLLTL (68 aa)) are excised as a propeptide.

This sequence belongs to the elevenin family. In terms of assembly, monomer. Expressed by the venom duct.

The protein resides in the secreted. Its function is as follows. May mimic the function of prey elevenin neuropeptide. In vivo, intracranial injection in mice induces hyperactivity. This is Elevenin from Conus ebraeus (Hebrew cone).